Here is a 323-residue protein sequence, read N- to C-terminus: MIRSVVRGIGSALPKRVMKNTDFEGIVETSDEWIVQRTGIRERHIAGEGETTVSLGAAAARAAIENAGLQPSDIDLVLLATSTPNNTFPASAVAIQRELGITRGFAFDLQAVCSGFIYAITTADLYIRGGMARRVLVIGAETFSHILDWTDRTTCVLFGDGAGAIVLEAAEGHGLTSDRGILAANLRSDGNHKEKLYVDGGPSTTQTVGHLRMEGREVFKHAVGMITDVIEASFEATGLTAEDIDWFVPHQANKRIIDASAKKLHIAEEKVVITVDRHGNTSAASVPLALATAVADGRIKKGDLVLLEAMGGGFTWGAVLVRW.

Residues Cys113 and His250 contribute to the active site. The segment at 251–255 (QANKR) is ACP-binding. Residue Asn280 is part of the active site.

The protein belongs to the thiolase-like superfamily. FabH family. Homodimer.

It localises to the cytoplasm. It catalyses the reaction malonyl-[ACP] + acetyl-CoA + H(+) = 3-oxobutanoyl-[ACP] + CO2 + CoA. It functions in the pathway lipid metabolism; fatty acid biosynthesis. In terms of biological role, catalyzes the condensation reaction of fatty acid synthesis by the addition to an acyl acceptor of two carbons from malonyl-ACP. Catalyzes the first condensation reaction which initiates fatty acid synthesis and may therefore play a role in governing the total rate of fatty acid production. Possesses both acetoacetyl-ACP synthase and acetyl transacylase activities. Its substrate specificity determines the biosynthesis of branched-chain and/or straight-chain of fatty acids. The chain is Beta-ketoacyl-[acyl-carrier-protein] synthase III from Brucella canis (strain ATCC 23365 / NCTC 10854 / RM-666).